Reading from the N-terminus, the 338-residue chain is Delta(9)-fatty-acid desaturase fat-7 (338 aa).

4 helical membrane-spanning segments follow: residues 51–71 (VALFAALHVAAAIGLYELVFH), 76–96 (TAVFSFALYVFSGFGITAGAH), 194–214 (YFPLVILFCFILPTIIPVYFW), and 218–238 (AFIAFYVAGTFRYCFTLHATW).

Belongs to the fatty acid desaturase type 1 family. In terms of tissue distribution, expressed in the intestine in adult worms and in all four larval stages.

The protein localises to the membrane. It carries out the reaction octadecanoyl-CoA + 2 Fe(II)-[cytochrome b5] + O2 + 2 H(+) = (9Z)-octadecenoyl-CoA + 2 Fe(III)-[cytochrome b5] + 2 H2O. The catalysed reaction is hexadecanoyl-CoA + 2 Fe(II)-[cytochrome b5] + O2 + 2 H(+) = (9Z)-hexadecenoyl-CoA + 2 Fe(III)-[cytochrome b5] + 2 H2O. The enzyme catalyses heptadecanoyl-CoA + 2 Fe(II)-[cytochrome b5] + O2 + 2 H(+) = (9Z)-heptadecenoyl-CoA + 2 Fe(III)-[cytochrome b5] + 2 H2O. It catalyses the reaction (11E)-octadecenoyl-CoA + 2 Fe(II)-[cytochrome b5] + O2 + 2 H(+) = (9Z,11E)-octadecadienoyl-CoA + 2 Fe(III)-[cytochrome b5] + 2 H2O. It participates in lipid metabolism; monounsaturated fatty acid biosynthesis. It functions in the pathway lipid metabolism; fatty acid metabolism. In terms of biological role, delta(9)-fatty acid desaturase that acts preferentially on stearoyl-CoA (octadecanoyl-CoA) producing the monounsaturated oleoyl-CoA ((9Z)-octadecenoyl-CoA), one of the most abundant monounsaturated fatty acid in Caenorhabditis elegans phospholipids and triacylglycerols. Also acts on palmitoyl-CoA (hexadecanoyl-CoA), heptadecanoyl-CoA and (11E)-octadecenoyl-CoA (trans-vaccenoyl-CoA), the monounsaturated fatty acids (MUFAs) produced are further used by several other desaturases and elongases as substrates to synthesize polyunsaturated fatty acids (PUFAs) endogenously (PUFAs are essential for membrane structure and many cellular and physiological processes). Unlike plants, Caenorhabditis elegans desaturases seem to use fatty acyl-CoAs as substrates. Partially inhibits expression of genes involved in beta-oxidation, such as ech-1 and acs-2, perhaps signaling via the actions of one of its fatty acid products. May form part of a negative feedback loop with the transcription factor nhr-49 to limit beta-oxidation, in which nhr-49 stimulates expression of fat-7 and acs-2, and in turn fat-7 indirectly inhibits acs-2 and other genes also involved in beta-oxidation. This is Delta(9)-fatty-acid desaturase fat-7 (fat-7) from Caenorhabditis elegans.